The following is a 691-amino-acid chain: Transcription termination factor Rho (691 aa).

The segment at 48–303 (ISDHQRGGSV…PEVDETELTE (256 aa)) is disordered. The span at 50-64 (DHQRGGSVADRDAAE) shows a compositional bias: basic and acidic residues. Composition is skewed to low complexity over residues 65 to 92 (RAAQ…PAAE) and 105 to 119 (DTSA…QPQA). Basic and acidic residues-rich tracts occupy residues 120–158 (EARE…SERR) and 188–273 (DADR…EGGR). The Rho RNA-BD domain occupies 307 to 390 (LQPVAGILDV…VKISSVNGQP (84 aa)). Residues 433–438 (GKGQRG), 445–450 (KAGKTM), and Arg476 each bind ATP.

It belongs to the Rho family. Homohexamer. The homohexamer assembles into an open ring structure.

Its function is as follows. Facilitates transcription termination by a mechanism that involves Rho binding to the nascent RNA, activation of Rho's RNA-dependent ATPase activity, and release of the mRNA from the DNA template. The protein is Transcription termination factor Rho of Micrococcus luteus (Micrococcus lysodeikticus).